A 397-amino-acid polypeptide reads, in one-letter code: Keratinocyte differentiation factor 1 (397 aa).

The segment covering 1–16 has biased composition (pro residues); the sequence is MPRPGQPRPSSGPPRL. Disordered regions lie at residues 1-67, 130-158, and 192-214; these read MPRP…SAEP, EHNG…MGSS, and LAEP…RGSE. The segment covering 44–55 has biased composition (basic and acidic residues); sequence RPDPKDPGHHGP. Residues 201–211 show a composition bias toward polar residues; that stretch reads SLPSTFTNSPR. Position 218 is a phosphoserine (Ser-218). 2 disordered regions span residues 304–339 and 361–392; these read ISTR…TMLG and ARKL…GAPL. Over residues 321-330 the composition is skewed to low complexity; it reads ARSTAPAAAP. The segment covering 375–388 has biased composition (polar residues); the sequence is SQDSSFQGTDTDSS.

The protein resides in the cytoplasm. It localises to the cell junction. In terms of biological role, plays a role in the regulation of the epidermis formation during early development. Required both as an inhibitor of basal cell proliferation and a promoter of differentiation of basal progenitor cell progeny. The polypeptide is Keratinocyte differentiation factor 1 (Kdf1) (Mus musculus (Mouse)).